A 119-amino-acid polypeptide reads, in one-letter code: Large ribosomal subunit protein bL20 (119 aa).

It belongs to the bacterial ribosomal protein bL20 family.

In terms of biological role, binds directly to 23S ribosomal RNA and is necessary for the in vitro assembly process of the 50S ribosomal subunit. It is not involved in the protein synthesizing functions of that subunit. This chain is Large ribosomal subunit protein bL20, found in Azoarcus sp. (strain BH72).